A 189-amino-acid polypeptide reads, in one-letter code: Capsid protein (189 aa).

It belongs to the tymoviruses capsid protein family.

It is found in the virion. Self-assembles to form a T=3 icosahedral capsid composed of 180 copies of the capsid protein. The capsid encapsulates the single-stranded RNA genome. A pentameric unit may be lost during decapsidation. The sequence is that of Capsid protein from Brassica.